A 448-amino-acid polypeptide reads, in one-letter code: Probable glycine dehydrogenase (decarboxylating) subunit 1 (448 aa).

Belongs to the GcvP family. N-terminal subunit subfamily. In terms of assembly, the glycine cleavage system is composed of four proteins: P, T, L and H. In this organism, the P 'protein' is a heterodimer of two subunits.

The enzyme catalyses N(6)-[(R)-lipoyl]-L-lysyl-[glycine-cleavage complex H protein] + glycine + H(+) = N(6)-[(R)-S(8)-aminomethyldihydrolipoyl]-L-lysyl-[glycine-cleavage complex H protein] + CO2. Its function is as follows. The glycine cleavage system catalyzes the degradation of glycine. The P protein binds the alpha-amino group of glycine through its pyridoxal phosphate cofactor; CO(2) is released and the remaining methylamine moiety is then transferred to the lipoamide cofactor of the H protein. This is Probable glycine dehydrogenase (decarboxylating) subunit 1 from Bacillus pumilus (strain SAFR-032).